Reading from the N-terminus, the 294-residue chain is MQQRTIQKAVEVVGIGLHKGEPIRLRLEPLSANAGIVFYREDLALNIPLSPDSVIDTRMATVIGSEKGFISTIEHFLSAVYAYGIDNMRVIVDGNEMPIMDGSSISFCLLLDEAGIKELDVPKKVICVKKAVEIKEGDKFVRLLPSDKATFDFRIKFDHPVIGVQSESFEFGTHNFIEEIARARTFGFAKDIQYLQSQNLALGATLQNAIGLDDHKVLNPEGLRFENEFARHKILDAMGDMMVSGHNILAKYESFAGSHNLNYRLTSKLLADSRNYEFVTVKELQSRAFAKSFA.

Zn(2+) is bound by residues histidine 75, histidine 232, and aspartate 236. The active-site Proton donor is histidine 259.

Belongs to the LpxC family. Requires Zn(2+) as cofactor.

The enzyme catalyses a UDP-3-O-[(3R)-3-hydroxyacyl]-N-acetyl-alpha-D-glucosamine + H2O = a UDP-3-O-[(3R)-3-hydroxyacyl]-alpha-D-glucosamine + acetate. The protein operates within glycolipid biosynthesis; lipid IV(A) biosynthesis; lipid IV(A) from (3R)-3-hydroxytetradecanoyl-[acyl-carrier-protein] and UDP-N-acetyl-alpha-D-glucosamine: step 2/6. Functionally, catalyzes the hydrolysis of UDP-3-O-myristoyl-N-acetylglucosamine to form UDP-3-O-myristoylglucosamine and acetate, the committed step in lipid A biosynthesis. The protein is UDP-3-O-acyl-N-acetylglucosamine deacetylase of Sulfurovum sp. (strain NBC37-1).